The chain runs to 647 residues: Macrolide export ATP-binding/permease protein MacB (647 aa).

One can recognise an ABC transporter domain in the interval 7–245; it reads IRLEDICKTF…EATLQPHEEI (239 aa). 43 to 50 lines the ATP pocket; it reads GASGSGKS. 4 helical membrane passes run 274-294, 529-549, 573-593, and 610-630; these read VLTL…LAIG, VAAI…LVSV, FIIE…ILGL, and FGPV…FGFL.

This sequence belongs to the ABC transporter superfamily. Macrolide exporter (TC 3.A.1.122) family. As to quaternary structure, homodimer.

It is found in the cell inner membrane. In terms of biological role, non-canonical ABC transporter that contains transmembrane domains (TMD), which form a pore in the inner membrane, and an ATP-binding domain (NBD), which is responsible for energy generation. Confers resistance against macrolides. In Brucella melitensis biotype 1 (strain ATCC 23456 / CCUG 17765 / NCTC 10094 / 16M), this protein is Macrolide export ATP-binding/permease protein MacB.